We begin with the raw amino-acid sequence, 310 residues long: Quinolinate synthase 2 (310 aa).

The iminosuccinate site is built by His-30 and Ser-47. Cys-92 is a [4Fe-4S] cluster binding site. Residues 118 to 120 (YVN) and Ser-135 each bind iminosuccinate. Residue Cys-177 participates in [4Fe-4S] cluster binding. Iminosuccinate is bound by residues 203 to 205 (HPE) and Thr-220. Cys-265 serves as a coordination point for [4Fe-4S] cluster.

This sequence belongs to the quinolinate synthase family. Type 2 subfamily. [4Fe-4S] cluster is required as a cofactor.

The protein resides in the cytoplasm. The catalysed reaction is iminosuccinate + dihydroxyacetone phosphate = quinolinate + phosphate + 2 H2O + H(+). Its pathway is cofactor biosynthesis; NAD(+) biosynthesis; quinolinate from iminoaspartate: step 1/1. In terms of biological role, catalyzes the condensation of iminoaspartate with dihydroxyacetone phosphate to form quinolinate. The protein is Quinolinate synthase 2 of Methanosarcina acetivorans (strain ATCC 35395 / DSM 2834 / JCM 12185 / C2A).